The following is a 453-amino-acid chain: Cytochrome b-c1 complex subunit 2, mitochondrial (453 aa).

The N-terminal 14 residues, 1 to 14 (MKLLSRAGSFSRFY), are a transit peptide targeting the mitochondrion. N6-acetyllysine is present on residues Lys66, Lys199, and Lys250. A Phosphoserine modification is found at Ser368.

The protein belongs to the peptidase M16 family. UQCRC2/QCR2 subfamily. In terms of assembly, component of the ubiquinol-cytochrome c oxidoreductase (cytochrome b-c1 complex, complex III, CIII), a multisubunit enzyme composed of 11 subunits. The complex is composed of 3 respiratory subunits cytochrome b, cytochrome c1 and Rieske protein UQCRFS1, 2 core protein subunits UQCRC1/QCR1 and UQCRC2/QCR2, and 6 low-molecular weight protein subunits UQCRH/QCR6, UQCRB/QCR7, UQCRQ/QCR8, UQCR10/QCR9, UQCR11/QCR10 and subunit 9, the cleavage product of Rieske protein UQCRFS1. The complex exists as an obligatory dimer and forms supercomplexes (SCs) in the inner mitochondrial membrane with NADH-ubiquinone oxidoreductase (complex I, CI) and cytochrome c oxidase (complex IV, CIV), resulting in different assemblies (supercomplex SCI(1)III(2)IV(1) and megacomplex MCI(2)III(2)IV(2)). Interacts with RAB5IF. Interacts with STMP1. Post-translationally, acetylation of Lys-159 and Lys-250 is observed in liver mitochondria from fasted mice but not from fed mice. In terms of tissue distribution, expressed in neurons and astrocytes of the cerebral cortex and hippocampus (at protein level).

It is found in the mitochondrion inner membrane. Functionally, component of the ubiquinol-cytochrome c oxidoreductase, a multisubunit transmembrane complex that is part of the mitochondrial electron transport chain which drives oxidative phosphorylation. The respiratory chain contains 3 multisubunit complexes succinate dehydrogenase (complex II, CII), ubiquinol-cytochrome c oxidoreductase (cytochrome b-c1 complex, complex III, CIII) and cytochrome c oxidase (complex IV, CIV), that cooperate to transfer electrons derived from NADH and succinate to molecular oxygen, creating an electrochemical gradient over the inner membrane that drives transmembrane transport and the ATP synthase. The cytochrome b-c1 complex catalyzes electron transfer from ubiquinol to cytochrome c, linking this redox reaction to translocation of protons across the mitochondrial inner membrane, with protons being carried across the membrane as hydrogens on the quinol. In the process called Q cycle, 2 protons are consumed from the matrix, 4 protons are released into the intermembrane space and 2 electrons are passed to cytochrome c. The 2 core subunits UQCRC1/QCR1 and UQCRC2/QCR2 are homologous to the 2 mitochondrial-processing peptidase (MPP) subunits beta-MPP and alpha-MPP respectively, and they seem to have preserved their MPP processing properties. May be involved in the in situ processing of UQCRFS1 into the mature Rieske protein and its mitochondrial targeting sequence (MTS)/subunit 9 when incorporated into complex III. The chain is Cytochrome b-c1 complex subunit 2, mitochondrial (Uqcrc2) from Mus musculus (Mouse).